Here is a 326-residue protein sequence, read N- to C-terminus: Mitochondrial glycine transporter (326 aa).

Solcar repeat units follow at residues 45–134, 141–225, and 237–321; these read HPVI…SKQY, PTAL…TRTA, and LIPL…MMAR. A run of 6 helical transmembrane segments spans residues 51–76, 109–135, 147–172, 200–223, 241–267, and 296–314; these read FLCG…TRLQ, GMSP…KQYF, VILG…TRYE, GLTA…SQTR, INFS…KTHM, and GSVP…AWTV.

The protein belongs to the mitochondrial carrier (TC 2.A.29) family. SLC25A38 subfamily.

The protein resides in the mitochondrion inner membrane. It catalyses the reaction glycine(in) = glycine(out). Mitochondrial glycine transporter that imports glycine into the mitochondrial matrix. Plays an important role in providing glycine for the first enzymatic step in heme biosynthesis, the condensation of glycine with succinyl-CoA to produce 5-aminolevulinate (ALA) in the mitochondrial matrix. Required during erythropoiesis. Its function is as follows. Plays a role as pro-apoptotic protein that induces caspase-dependent apoptosis. This Mus musculus (Mouse) protein is Mitochondrial glycine transporter.